A 436-amino-acid polypeptide reads, in one-letter code: Tol-Pal system protein TolB (436 aa).

The N-terminal stretch at 1 to 19 (MVKCSLIRALMVVAGLVGA) is a signal peptide.

The protein belongs to the TolB family. The Tol-Pal system is composed of five core proteins: the inner membrane proteins TolA, TolQ and TolR, the periplasmic protein TolB and the outer membrane protein Pal. They form a network linking the inner and outer membranes and the peptidoglycan layer.

It is found in the periplasm. Part of the Tol-Pal system, which plays a role in outer membrane invagination during cell division and is important for maintaining outer membrane integrity. The protein is Tol-Pal system protein TolB of Rhizobium etli (strain ATCC 51251 / DSM 11541 / JCM 21823 / NBRC 15573 / CFN 42).